Reading from the N-terminus, the 161-residue chain is Putative 4-hydroxy-4-methyl-2-oxoglutarate aldolase (161 aa).

Substrate-binding positions include 78–81 (GDVI) and Arg-100. Asp-101 serves as a coordination point for a divalent metal cation.

It belongs to the class II aldolase/RraA-like family. In terms of assembly, homotrimer. A divalent metal cation is required as a cofactor.

The enzyme catalyses 4-hydroxy-4-methyl-2-oxoglutarate = 2 pyruvate. It carries out the reaction oxaloacetate + H(+) = pyruvate + CO2. In terms of biological role, catalyzes the aldol cleavage of 4-hydroxy-4-methyl-2-oxoglutarate (HMG) into 2 molecules of pyruvate. Also contains a secondary oxaloacetate (OAA) decarboxylase activity due to the common pyruvate enolate transition state formed following C-C bond cleavage in the retro-aldol and decarboxylation reactions. This chain is Putative 4-hydroxy-4-methyl-2-oxoglutarate aldolase, found in Mycobacterium avium (strain 104).